A 415-amino-acid polypeptide reads, in one-letter code: Isocitrate dehydrogenase [NADP] (415 aa).

Residues 77–79 (TIT) and R84 each bind NADP(+). T79 lines the substrate pocket. Substrate contacts are provided by residues 96–102 (SPNGTIR), R111, and R134. D254 serves as a coordination point for Mn(2+). K262 serves as a coordination point for NADP(+). D277 contributes to the Mn(2+) binding site. NADP(+) contacts are provided by residues 312–317 (GTVTRH) and N330.

Belongs to the isocitrate and isopropylmalate dehydrogenases family. Heterodimer. The cofactor is Mg(2+). It depends on Mn(2+) as a cofactor.

Its subcellular location is the cytoplasm. The enzyme catalyses D-threo-isocitrate + NADP(+) = 2-oxoglutarate + CO2 + NADPH. Functionally, may supply 2-oxoglutarate for amino acid biosynthesis and ammonia assimilation via the glutamine synthetase/glutamate synthase (GS/GOGAT) pathway. The chain is Isocitrate dehydrogenase [NADP] from Nicotiana tabacum (Common tobacco).